Consider the following 473-residue polypeptide: Photosystem II CP43 reaction center protein (473 aa).

A propeptide spanning residues 1–14 (MKTLYSLRRFYPVE) is cleaved from the precursor. N-acetylthreonine is present on threonine 15. Position 15 is a phosphothreonine (threonine 15). The next 5 helical transmembrane spans lie at 69–93 (LFEV…PHLA), 134–155 (LLGP…KDRN), 178–200 (KALY…RKIT), 255–275 (KPFA…LSYS), and 291–312 (WFNN…ASQA). Glutamate 367 provides a ligand contact to [CaMn4O5] cluster. Residues 447–471 (RARAAAAGFEKGIDRDFEPVLSMTP) traverse the membrane as a helical segment.

The protein belongs to the PsbB/PsbC family. PsbC subfamily. PSII is composed of 1 copy each of membrane proteins PsbA, PsbB, PsbC, PsbD, PsbE, PsbF, PsbH, PsbI, PsbJ, PsbK, PsbL, PsbM, PsbT, PsbX, PsbY, PsbZ, Psb30/Ycf12, at least 3 peripheral proteins of the oxygen-evolving complex and a large number of cofactors. It forms dimeric complexes. Binds multiple chlorophylls and provides some of the ligands for the Ca-4Mn-5O cluster of the oxygen-evolving complex. It may also provide a ligand for a Cl- that is required for oxygen evolution. PSII binds additional chlorophylls, carotenoids and specific lipids. is required as a cofactor.

The protein resides in the plastid. Its subcellular location is the chloroplast thylakoid membrane. Functionally, one of the components of the core complex of photosystem II (PSII). It binds chlorophyll and helps catalyze the primary light-induced photochemical processes of PSII. PSII is a light-driven water:plastoquinone oxidoreductase, using light energy to abstract electrons from H(2)O, generating O(2) and a proton gradient subsequently used for ATP formation. The polypeptide is Photosystem II CP43 reaction center protein (Buxus microphylla (Littleleaf boxwood)).